Here is a 390-residue protein sequence, read N- to C-terminus: S-adenosylmethionine synthase 2 (390 aa).

Glu9 is a binding site for Mg(2+). Residue His15 participates in ATP binding. A K(+)-binding site is contributed by Glu43. Residues Glu56 and Gln99 each contribute to the L-methionine site. Residues 167 to 169 (DGK), 235 to 238 (SGRF), Asp246, 252 to 253 (RK), Ala269, Lys273, and Lys277 contribute to the ATP site. Asp246 contributes to the L-methionine binding site. Lys277 is an L-methionine binding site.

It belongs to the AdoMet synthase family. Homotetramer. Mn(2+) serves as cofactor. Requires Mg(2+) as cofactor. Co(2+) is required as a cofactor. It depends on K(+) as a cofactor.

The protein resides in the cytoplasm. The catalysed reaction is L-methionine + ATP + H2O = S-adenosyl-L-methionine + phosphate + diphosphate. It functions in the pathway amino-acid biosynthesis; S-adenosyl-L-methionine biosynthesis; S-adenosyl-L-methionine from L-methionine: step 1/1. Its function is as follows. Catalyzes the formation of S-adenosylmethionine from methionine and ATP. The reaction comprises two steps that are both catalyzed by the same enzyme: formation of S-adenosylmethionine (AdoMet) and triphosphate, and subsequent hydrolysis of the triphosphate. This is S-adenosylmethionine synthase 2 (METK2) from Solanum tuberosum (Potato).